Consider the following 97-residue polypeptide: Co-chaperonin GroES (97 aa).

The protein belongs to the GroES chaperonin family. In terms of assembly, heptamer of 7 subunits arranged in a ring. Interacts with the chaperonin GroEL.

Its subcellular location is the cytoplasm. Its function is as follows. Together with the chaperonin GroEL, plays an essential role in assisting protein folding. The GroEL-GroES system forms a nano-cage that allows encapsulation of the non-native substrate proteins and provides a physical environment optimized to promote and accelerate protein folding. GroES binds to the apical surface of the GroEL ring, thereby capping the opening of the GroEL channel. In Burkholderia vietnamiensis, this protein is Co-chaperonin GroES.